The sequence spans 466 residues: Argininosuccinate lyase (466 aa).

This sequence belongs to the lyase 1 family. Argininosuccinate lyase subfamily.

Its subcellular location is the cytoplasm. The catalysed reaction is 2-(N(omega)-L-arginino)succinate = fumarate + L-arginine. It participates in amino-acid biosynthesis; L-arginine biosynthesis; L-arginine from L-ornithine and carbamoyl phosphate: step 3/3. In Brucella anthropi (strain ATCC 49188 / DSM 6882 / CCUG 24695 / JCM 21032 / LMG 3331 / NBRC 15819 / NCTC 12168 / Alc 37) (Ochrobactrum anthropi), this protein is Argininosuccinate lyase.